We begin with the raw amino-acid sequence, 361 residues long: D-amino-acid oxidase (361 aa).

The first 22 residues, M1–S22, serve as a signal peptide directing secretion. A10, I13, K34, H35, A45, S46, G50, and N52 together coordinate FAD. Residues N193 and N222 are each glycosylated (N-linked (GlcNAc...) asparagine). (R)-lactate contacts are provided by Y242, Y258, and R305. Anthranilate is bound by residues Y242, Y258, and R305. R305, S332, G335, Y336, and Q337 together coordinate FAD. Residues S359–L361 carry the Microbody targeting signal motif.

This sequence belongs to the DAMOX/DASOX family. FAD serves as cofactor. The N-terminus is blocked.

It is found in the peroxisome matrix. It catalyses the reaction a D-alpha-amino acid + O2 + H2O = a 2-oxocarboxylate + H2O2 + NH4(+). Catalyzes the oxidative deamination of D-amino acids with broad substrate specificity. Enables the organism to utilize D-amino acids as a source of nutrients. The protein is D-amino-acid oxidase of Fusarium vanettenii (Neocosmospora pisi).